The primary structure comprises 349 residues: N-acetyl-gamma-glutamyl-phosphate reductase (349 aa).

Cys149 is a catalytic residue.

This sequence belongs to the NAGSA dehydrogenase family. Type 1 subfamily.

The protein resides in the cytoplasm. The catalysed reaction is N-acetyl-L-glutamate 5-semialdehyde + phosphate + NADP(+) = N-acetyl-L-glutamyl 5-phosphate + NADPH + H(+). Its pathway is amino-acid biosynthesis; L-arginine biosynthesis; N(2)-acetyl-L-ornithine from L-glutamate: step 3/4. Its function is as follows. Catalyzes the NADPH-dependent reduction of N-acetyl-5-glutamyl phosphate to yield N-acetyl-L-glutamate 5-semialdehyde. The sequence is that of N-acetyl-gamma-glutamyl-phosphate reductase from Acinetobacter baumannii (strain SDF).